Reading from the N-terminus, the 167-residue chain is Peptide deformylase (167 aa).

Cysteine 91 and histidine 133 together coordinate Fe cation. Residue glutamate 134 is part of the active site. Histidine 137 serves as a coordination point for Fe cation.

Belongs to the polypeptide deformylase family. Fe(2+) serves as cofactor.

The catalysed reaction is N-terminal N-formyl-L-methionyl-[peptide] + H2O = N-terminal L-methionyl-[peptide] + formate. Functionally, removes the formyl group from the N-terminal Met of newly synthesized proteins. Requires at least a dipeptide for an efficient rate of reaction. N-terminal L-methionine is a prerequisite for activity but the enzyme has broad specificity at other positions. In Chromobacterium violaceum (strain ATCC 12472 / DSM 30191 / JCM 1249 / CCUG 213 / NBRC 12614 / NCIMB 9131 / NCTC 9757 / MK), this protein is Peptide deformylase.